The sequence spans 282 residues: DNA-dependent metalloprotease WSS1 homolog 2 (282 aa).

One can recognise a Ubiquitin-like domain in the interval 1-75 (MELKFSCRGN…CLIRQDKDIV (75 aa)). The region spanning 99 to 274 (PHTTPKPASI…LLAAAERRKQ (176 aa)) is the WLM domain. Residue histidine 202 participates in Zn(2+) binding. Glutamate 203 is an active-site residue. Zn(2+) is bound by residues histidine 206 and histidine 212. The segment at 234–282 (GKPGSYVSDRASYTPQQDNDDEDQKNHRRDLLLAAAERRKQSGSKVQKE) is disordered. Residues 269–282 (AERRKQSGSKVQKE) show a composition bias toward basic and acidic residues.

This sequence belongs to the peptidase M3 family. WSS1-like metalloprotease (WLM) subfamily. Zn(2+) is required as a cofactor.

It localises to the cytoplasm. The protein resides in the nucleus. Functionally, metalloendopeptidase that acts selectively on DNA-binding proteins. DNA is needed to bring the protease and substrates together to enable proteolysis. Involved in the repair of toxic DNA-protein cross-links (DPCs) such as covalently trapped topoisomerase 1 (TOP1) adducts on DNA lesions or DPCs induced by reactive compounds such as formaldehyde. This chain is DNA-dependent metalloprotease WSS1 homolog 2, found in Schizosaccharomyces pombe (strain 972 / ATCC 24843) (Fission yeast).